The chain runs to 654 residues: Glutamyl-tRNA(Gln) amidotransferase subunit B, mitochondrial (654 aa).

Residues 1–8 (MGRIPTRE) constitute a mitochondrion transit peptide. The interval 79 to 101 (DQAKASKAQAKGKKKRSSADNQT) is disordered.

This sequence belongs to the GatB/GatE family. GatB subfamily. Subunit of the heterotrimeric GatCAB amidotransferase (AdT) complex, composed of A, B and C subunits.

The protein resides in the mitochondrion. The catalysed reaction is L-glutamyl-tRNA(Gln) + L-glutamine + ATP + H2O = L-glutaminyl-tRNA(Gln) + L-glutamate + ADP + phosphate + H(+). Functionally, allows the formation of correctly charged Gln-tRNA(Gln) through the transamidation of misacylated Glu-tRNA(Gln) in the mitochondria. The reaction takes place in the presence of glutamine and ATP through an activated gamma-phospho-Glu-tRNA(Gln). In Pyricularia oryzae (strain 70-15 / ATCC MYA-4617 / FGSC 8958) (Rice blast fungus), this protein is Glutamyl-tRNA(Gln) amidotransferase subunit B, mitochondrial.